Reading from the N-terminus, the 312-residue chain is Porphobilinogen deaminase (312 aa).

An S-(dipyrrolylmethanemethyl)cysteine modification is found at Cys241.

The protein belongs to the HMBS family. In terms of assembly, monomer. Dipyrromethane serves as cofactor.

It catalyses the reaction 4 porphobilinogen + H2O = hydroxymethylbilane + 4 NH4(+). Its pathway is porphyrin-containing compound metabolism; protoporphyrin-IX biosynthesis; coproporphyrinogen-III from 5-aminolevulinate: step 2/4. It functions in the pathway porphyrin-containing compound metabolism; chlorophyll biosynthesis. Tetrapolymerization of the monopyrrole PBG into the hydroxymethylbilane pre-uroporphyrinogen in several discrete steps. In Prosthecochloris aestuarii (strain DSM 271 / SK 413), this protein is Porphobilinogen deaminase.